The primary structure comprises 383 residues: Acetylornithine deacetylase (383 aa).

H80 is a Zn(2+) binding site. The active site involves D82. A Zn(2+)-binding site is contributed by D112. The active site involves E144. Zn(2+) is bound by residues E145, E169, and H355.

This sequence belongs to the peptidase M20A family. ArgE subfamily. As to quaternary structure, homodimer. Requires Zn(2+) as cofactor. The cofactor is Co(2+). Glutathione is required as a cofactor.

The protein resides in the cytoplasm. The enzyme catalyses N(2)-acetyl-L-ornithine + H2O = L-ornithine + acetate. It functions in the pathway amino-acid biosynthesis; L-arginine biosynthesis; L-ornithine from N(2)-acetyl-L-ornithine (linear): step 1/1. Catalyzes the hydrolysis of the amide bond of N(2)-acetylated L-amino acids. Cleaves the acetyl group from N-acetyl-L-ornithine to form L-ornithine, an intermediate in L-arginine biosynthesis pathway, and a branchpoint in the synthesis of polyamines. The chain is Acetylornithine deacetylase from Escherichia coli (strain SMS-3-5 / SECEC).